Here is a 509-residue protein sequence, read N- to C-terminus: Zinc finger CCCH-type with G patch domain-containing protein (509 aa).

Residues 41-61 are disordered; sequence TRGSEPEATSDTKTPETSDNI. The span at 47-58 shows a compositional bias: polar residues; that stretch reads EATSDTKTPETS. The segment at 155-178 adopts a C3H1-type zinc-finger fold; it reads PCNYFLEGECRFDEVRCRYSHGAL. The interval 254-278 is disordered; the sequence is DDDLTSESEESNETDGSDAGNDSDM. A G-patch domain is found at 310-356; it reads TRGIGSKLMANMGYIHGTGLGSDGRGIVTPVSAQILPQGRSLDACME. A disordered region spans residues 410–433; sequence GSQQTENANKKTKPNNLQQHSNKT. The span at 423 to 433 shows a compositional bias: polar residues; it reads PNNLQQHSNKT.

It is found in the nucleus. In terms of biological role, transcription repressor. The chain is Zinc finger CCCH-type with G patch domain-containing protein from Drosophila mojavensis (Fruit fly).